A 345-amino-acid polypeptide reads, in one-letter code: Lysine-specific demethylase JMJ32 (345 aa).

Residues 122–315 (GYLQQQNDCF…IKYAYFNFLQ (194 aa)) enclose the JmjC domain. Positions 174, 176, and 281 each coordinate Fe cation.

It belongs to the JARID1 histone demethylase family. It depends on Fe(2+) as a cofactor. In terms of tissue distribution, expressed ubiquitously including in vasculatures, leaves, siliques, roots and inflorescences. Present in the root meristem. Accumulates in cotyledons and root tips of young seedlings.

The protein localises to the nucleus. It localises to the cytoplasm. Its subcellular location is the endoplasmic reticulum. The enzyme catalyses N(6),N(6),N(6)-trimethyl-L-lysyl(27)-[histone H3] + 2-oxoglutarate + O2 = N(6),N(6)-dimethyl-L-lysyl(27)-[histone H3] + formaldehyde + succinate + CO2. It catalyses the reaction N(6),N(6)-dimethyl-L-lysyl(27)-[histone H3] + 2-oxoglutarate + O2 = N(6)-methyl-L-lysyl(27)-[histone H3] + formaldehyde + succinate + CO2. It carries out the reaction N(6),N(6),N(6)-trimethyl-L-lysyl(27)-[histone H3] + 2 2-oxoglutarate + 2 O2 = N(6)-methyl-L-lysyl(27)-[histone H3] + 2 formaldehyde + 2 succinate + 2 CO2. Its function is as follows. Histone demethylase that demethylates 'Lys-27' (H3K27me) of histone H3 with a specific activity for H3K27me3 and H3K27me2, and involved in the regulation of gene expression. No activity on H3K27me1. Together with JMJ30, regulates the flowering-repressor FLOWERING LOCUS C (FLC) locus by removing the repressive histone modification H3 lysine 27 trimethylation (H3K27me3), especially at elevated temperatures (e.g. 29 degrees Celsius), thus preventing extreme precocious flowering. JMJ30 and JMJ32 are regulators involved in the integration of abscisic acid (ABA) and brassinosteroids (BR) signaling pathways. Together with JMJ30, controls ABA-mediated growth arrest during the post-germination stage in unfavorable conditions, and responses to ABA during root development, via the removal of repressive histone mark (H3K27me3) from the SnRK2.8 promoter, thus promoting SnRK2.8 expression and subsequent kinase-dependent ABI3 activation. In addition, removes the repressive histone marks (H3K27me3) from the BZR1 locus in response to stress and ABA, thus activating the BR signaling pathway which, in turn, inhibits the ABA signaling pathway. In Arabidopsis thaliana (Mouse-ear cress), this protein is Lysine-specific demethylase JMJ32.